A 262-amino-acid polypeptide reads, in one-letter code: tRNA pseudouridine synthase A (262 aa).

Residue aspartate 51 is the Nucleophile of the active site. Tyrosine 109 serves as a coordination point for substrate.

Belongs to the tRNA pseudouridine synthase TruA family. In terms of assembly, homodimer.

It catalyses the reaction uridine(38/39/40) in tRNA = pseudouridine(38/39/40) in tRNA. In terms of biological role, formation of pseudouridine at positions 38, 39 and 40 in the anticodon stem and loop of transfer RNAs. The protein is tRNA pseudouridine synthase A of Legionella pneumophila (strain Paris).